We begin with the raw amino-acid sequence, 243 residues long: 7-carboxy-7-deazaguanine synthase (243 aa).

Residues 9 to 11 (IMG) and arginine 24 each bind substrate. The 229-residue stretch at 15-243 (YIGRRFIFVR…IQMHKYLGML (229 aa)) folds into the Radical SAM core domain. [4Fe-4S] cluster contacts are provided by cysteine 28, cysteine 32, and cysteine 35. Threonine 84 lines the substrate pocket. Position 86 (glycine 86) interacts with S-adenosyl-L-methionine.

It belongs to the radical SAM superfamily. 7-carboxy-7-deazaguanine synthase family. Homodimer. It depends on [4Fe-4S] cluster as a cofactor. The cofactor is S-adenosyl-L-methionine. Requires Mg(2+) as cofactor.

It carries out the reaction 6-carboxy-5,6,7,8-tetrahydropterin + H(+) = 7-carboxy-7-deazaguanine + NH4(+). It participates in purine metabolism; 7-cyano-7-deazaguanine biosynthesis. Catalyzes the complex heterocyclic radical-mediated conversion of 6-carboxy-5,6,7,8-tetrahydropterin (CPH4) to 7-carboxy-7-deazaguanine (CDG), a step common to the biosynthetic pathways of all 7-deazapurine-containing compounds. The protein is 7-carboxy-7-deazaguanine synthase of Methanocaldococcus jannaschii (strain ATCC 43067 / DSM 2661 / JAL-1 / JCM 10045 / NBRC 100440) (Methanococcus jannaschii).